A 202-amino-acid chain; its full sequence is Imidazoleglycerol-phosphate dehydratase (202 aa).

It belongs to the imidazoleglycerol-phosphate dehydratase family.

It localises to the cytoplasm. The catalysed reaction is D-erythro-1-(imidazol-4-yl)glycerol 3-phosphate = 3-(imidazol-4-yl)-2-oxopropyl phosphate + H2O. It functions in the pathway amino-acid biosynthesis; L-histidine biosynthesis; L-histidine from 5-phospho-alpha-D-ribose 1-diphosphate: step 6/9. The chain is Imidazoleglycerol-phosphate dehydratase from Acinetobacter baumannii (strain AYE).